A 321-amino-acid polypeptide reads, in one-letter code: Olfactory receptor 14J1 (321 aa).

At Met-1 to Ile-23 the chain is on the extracellular side. The N-linked (GlcNAc...) asparagine glycan is linked to Asn-3. A helical transmembrane segment spans residues Leu-24–Ile-44. Over Thr-45–Arg-52 the chain is Cytoplasmic. Residues Leu-53 to Ser-73 form a helical membrane-spanning segment. Topologically, residues Val-74 to Leu-97 are extracellular. A disulfide bond links Cys-95 and Cys-187. Residues Gln-98–Tyr-118 traverse the membrane as a helical segment. The Cytoplasmic segment spans residues Asp-119 to Arg-137. A helical transmembrane segment spans residues Ala-138–Ala-158. Over Ala-159–Glu-194 the chain is Extracellular. A helical membrane pass occupies residues Ile-195–Ser-215. At Tyr-216 to Val-235 the chain is on the cytoplasmic side. The helical transmembrane segment at Phe-236–Glu-256 threads the bilayer. Residues Phe-257–Asp-269 are Extracellular-facing. The helical transmembrane segment at Leu-270–Leu-290 threads the bilayer. The Cytoplasmic segment spans residues Arg-291–Leu-321.

The protein belongs to the G-protein coupled receptor 1 family.

It is found in the cell membrane. Functionally, odorant receptor. In Homo sapiens (Human), this protein is Olfactory receptor 14J1 (OR14J1).